Consider the following 99-residue polypeptide: Aspartyl/glutamyl-tRNA(Asn/Gln) amidotransferase subunit C (99 aa).

The protein belongs to the GatC family. Heterotrimer of A, B and C subunits.

It catalyses the reaction L-glutamyl-tRNA(Gln) + L-glutamine + ATP + H2O = L-glutaminyl-tRNA(Gln) + L-glutamate + ADP + phosphate + H(+). It carries out the reaction L-aspartyl-tRNA(Asn) + L-glutamine + ATP + H2O = L-asparaginyl-tRNA(Asn) + L-glutamate + ADP + phosphate + 2 H(+). Functionally, allows the formation of correctly charged Asn-tRNA(Asn) or Gln-tRNA(Gln) through the transamidation of misacylated Asp-tRNA(Asn) or Glu-tRNA(Gln) in organisms which lack either or both of asparaginyl-tRNA or glutaminyl-tRNA synthetases. The reaction takes place in the presence of glutamine and ATP through an activated phospho-Asp-tRNA(Asn) or phospho-Glu-tRNA(Gln). This is Aspartyl/glutamyl-tRNA(Asn/Gln) amidotransferase subunit C from Bifidobacterium longum (strain NCC 2705).